Here is a 274-residue protein sequence, read N- to C-terminus: Octanoyltransferase LipM (274 aa).

The BPL/LPL catalytic domain occupies 32–244 (GEVPPTLRFY…GFARALGLTL (213 aa)). Cys146 (acyl-thioester intermediate) is an active-site residue.

It belongs to the octanoyltransferase LipM family. Monomer.

It catalyses the reaction octanoyl-[ACP] + L-lysyl-[protein] = N(6)-octanoyl-L-lysyl-[protein] + holo-[ACP] + H(+). Its pathway is protein modification; protein lipoylation via endogenous pathway; protein N(6)-(lipoyl)lysine from octanoyl-[acyl-carrier-protein]. Its function is as follows. Catalyzes the transfer of endogenously produced octanoic acid from octanoyl-acyl-carrier-protein onto the lipoyl domain of GcvH, an intermediate carrier during protein lipoylation. This Symbiobacterium thermophilum (strain DSM 24528 / JCM 14929 / IAM 14863 / T) protein is Octanoyltransferase LipM.